The chain runs to 411 residues: Elongation factor Tu, apicoplast (411 aa).

The tr-type G domain occupies 10–214 (KPHVNIGTIG…TVDSYIEKPE (205 aa)). The interval 19–26 (GHVDHGKT) is G1. 19 to 26 (GHVDHGKT) provides a ligand contact to GTP. Threonine 26 is a binding site for Mg(2+). The G2 stretch occupies residues 61 to 65 (GITIN). A G3 region spans residues 82–85 (DCPG). GTP-binding positions include 82 to 86 (DCPGH) and 137 to 140 (NKED). Residues 137–140 (NKED) form a G4 region. The interval 175–177 (SAL) is G5.

Belongs to the TRAFAC class translation factor GTPase superfamily. Classic translation factor GTPase family. EF-Tu/EF-1A subfamily.

The protein resides in the plastid. It localises to the apicoplast. The catalysed reaction is GTP + H2O = GDP + phosphate + H(+). Functionally, GTP hydrolase that promotes the GTP-dependent binding of aminoacyl-tRNA to the A-site of ribosomes during protein biosynthesis. The protein is Elongation factor Tu, apicoplast (tufA) of Theileria parva (East coast fever infection agent).